The chain runs to 847 residues: Vacuolar membrane protease (847 aa).

Residues 1 to 17 (MQFGKSLLKHVYTRTFK) are Cytoplasmic-facing. Residues 18 to 38 (SSLTCSIFAFTLLMIFFVLDW) traverse the membrane as a helical segment. Residues 39-348 (KRMNVYPRLD…GSYWQINLNL (310 aa)) lie on the Vacuolar side of the membrane. Residues histidine 146 and aspartate 158 each contribute to the Zn(2+) site. Catalysis depends on glutamate 190, which acts as the Proton acceptor. Glutamate 191 is a binding site for Zn(2+). Asparagine 208 carries N-linked (GlcNAc...) asparagine glycosylation. Glutamate 216 lines the Zn(2+) pocket. An N-linked (GlcNAc...) asparagine glycan is attached at asparagine 274. Histidine 291 is a Zn(2+) binding site. Residues 349-369 (HLFLNVVFLIACPAILFMCLF) traverse the membrane as a helical segment. Over 370–381 (RFPSLYAQLKKP) the chain is Cytoplasmic. A helical transmembrane segment spans residues 382–402 (CYLICFTLSSLFVLIFDYVVV). Over 403–415 (QSLTKLNPYVIHS) the chain is Vacuolar. A helical membrane pass occupies residues 416-436 (SPDAVLAFFFLTNLLGLVYSF). The Cytoplasmic portion of the chain corresponds to 437–454 (RYVATHSRMSNEELSCIE). The chain crosses the membrane as a helical span at residues 455–475 (IVLIWYVSMFWYISLLIATLT). Residues 476 to 482 (SIVRGLG) lie on the Vacuolar side of the membrane. Residues 483-503 (SLYFVNFGFFCSFFCCILTLI) form a helical membrane-spanning segment. Residues 504-560 (RVRYFVDRMVTINRPANPEQMPLVQSTSGNAYGTSRYPQHRLKAVVSKSASVKLNDN) lie on the Cytoplasmic side of the membrane. The helical transmembrane segment at 561 to 581 (LWSVLFFSCLVPLPLFTCYNL) threads the bilayer. Topologically, residues 582–605 (LSEVFIPAVHQSLIDGPYSNTCYK) are vacuolar. The helical transmembrane segment at 606-626 (FAVILVFMAIINSSPFVFRAL) threads the bilayer. The Cytoplasmic portion of the chain corresponds to 627–630 (SKKS). Residues 631-651 (SAILLMLWVSLLFNILRAEPF) traverse the membrane as a helical segment. The Vacuolar portion of the chain corresponds to 652–847 (NEKAPIKFRV…LLKMSKTHVM (196 aa)). N-linked (GlcNAc...) asparagine glycosylation is found at asparagine 726, asparagine 734, asparagine 800, and asparagine 834.

It belongs to the peptidase M28 family. Zn(2+) serves as cofactor.

It localises to the vacuole membrane. In terms of biological role, may be involved in vacuolar sorting and osmoregulation. The protein is Vacuolar membrane protease of Schizosaccharomyces japonicus (strain yFS275 / FY16936) (Fission yeast).